A 184-amino-acid chain; its full sequence is Adenine phosphoribosyltransferase (184 aa).

The protein belongs to the purine/pyrimidine phosphoribosyltransferase family. In terms of assembly, homodimer.

The protein resides in the cytoplasm. The catalysed reaction is AMP + diphosphate = 5-phospho-alpha-D-ribose 1-diphosphate + adenine. The protein operates within purine metabolism; AMP biosynthesis via salvage pathway; AMP from adenine: step 1/1. Catalyzes a salvage reaction resulting in the formation of AMP, that is energically less costly than de novo synthesis. The chain is Adenine phosphoribosyltransferase from Blochmanniella pennsylvanica (strain BPEN).